The primary structure comprises 573 residues: Lauric acid 10-hydroxylase (573 aa).

A run of 2 helical transmembrane segments spans residues 3 to 23 (YVNILLGLFFTWFLVNGLMSL) and 298 to 318 (LFPTPFLPFIIICPFLYLLIF). Position 516 (cysteine 516) interacts with heme.

This sequence belongs to the cytochrome P450 family. The cofactor is heme. Mostly expressed in flowers and leaves and, at low levels, in roots and stems.

It is found in the endoplasmic reticulum membrane. It carries out the reaction an omega-methyl-medium-chain fatty acid + reduced [NADPH--hemoprotein reductase] + O2 = an omega-hydroxy-medium-chain fatty acid + oxidized [NADPH--hemoprotein reductase] + H2O + H(+). The catalysed reaction is decanoate + reduced [NADPH--hemoprotein reductase] + O2 = 10-hydroxydecanoate + oxidized [NADPH--hemoprotein reductase] + H2O + H(+). It catalyses the reaction dodecanoate + reduced [NADPH--hemoprotein reductase] + O2 = 12-hydroxydodecanoate + oxidized [NADPH--hemoprotein reductase] + H2O + H(+). It participates in lipid metabolism; fatty acid metabolism. In terms of biological role, cytochrome P450 hydroxylase catalyzing the conversion of decanoate (capric acid) and dodecanoate (lauric acid) to their corresponding omega-hydroxy metabolites, 10-hydroxydecanoate and 12-hydroxydodecanoate, respectively; these hydroxylated components affect plant growth, including reducing root elongation. The protein is Lauric acid 10-hydroxylase of Petunia hybrida (Petunia).